We begin with the raw amino-acid sequence, 219 residues long: N-(5'-phosphoribosyl)anthranilate isomerase (219 aa).

The protein belongs to the TrpF family.

The enzyme catalyses N-(5-phospho-beta-D-ribosyl)anthranilate = 1-(2-carboxyphenylamino)-1-deoxy-D-ribulose 5-phosphate. The protein operates within amino-acid biosynthesis; L-tryptophan biosynthesis; L-tryptophan from chorismate: step 3/5. This chain is N-(5'-phosphoribosyl)anthranilate isomerase, found in Bordetella avium (strain 197N).